The following is a 427-amino-acid chain: 3-phosphoshikimate 1-carboxyvinyltransferase (427 aa).

Lys-22, Ser-23, and Arg-27 together coordinate 3-phosphoshikimate. Residue Lys-22 participates in phosphoenolpyruvate binding. Positions 96 and 124 each coordinate phosphoenolpyruvate. 3-phosphoshikimate contacts are provided by Ser-169, Ser-170, Gln-171, Ser-197, Asp-313, Asn-336, and Lys-340. Position 171 (Gln-171) interacts with phosphoenolpyruvate. The Proton acceptor role is filled by Asp-313. Positions 344, 386, and 411 each coordinate phosphoenolpyruvate.

It belongs to the EPSP synthase family. In terms of assembly, monomer.

It is found in the cytoplasm. It carries out the reaction 3-phosphoshikimate + phosphoenolpyruvate = 5-O-(1-carboxyvinyl)-3-phosphoshikimate + phosphate. The protein operates within metabolic intermediate biosynthesis; chorismate biosynthesis; chorismate from D-erythrose 4-phosphate and phosphoenolpyruvate: step 6/7. Functionally, catalyzes the transfer of the enolpyruvyl moiety of phosphoenolpyruvate (PEP) to the 5-hydroxyl of shikimate-3-phosphate (S3P) to produce enolpyruvyl shikimate-3-phosphate and inorganic phosphate. The polypeptide is 3-phosphoshikimate 1-carboxyvinyltransferase (Escherichia coli O9:H4 (strain HS)).